Here is a 1761-residue protein sequence, read N- to C-terminus: MKDNIPTGSIIIPLNHHPQQQQIPQQQEQQQQQQQQQQQQQQQQQQQQQQQQQQQQQQQQQQQEQQNNNNNINDNINGNNNSNEIKNTKDANITNNNGTSIIISLSPPPSPALNSSSSSTINSNNTTISGGDNENNNNNTNNTNNNINNSNNSNNNNSNNNSNNNNNNNNNNNNNNNNNNNNNNNNNNNNNNNNNNTNEEGNKTNINTTNNNSQNININNGINKNTRNNNNNNNNNNKQMTPPTFKNNLQVKHQPQSSSGGSIGGSNKLSLSKRVKSTTSSRASIIDSIDIDIVFNSLKNSITSKNSFVLGVHRHRMSSISSISNTTNETTTTTTTTTNTTIEDHQIGSIGNNNNNNNNNNNNNNNYFNVNNGNSNNINNYNNSGNGNNNNNNNNNNNNNNNNNNNNNNNNNNNNNNNNHFNSYSNNNNNSNSNNNSNNNLHGLNNNNNGVMESSDFNSDTVGRGSIFTVSNSDVNSDSNVGLNQPSFNDLTITCDTLTETDEEDLMEKFLEDSDPDIDEEDDDDDFNEEEFMKFQTQFLHNKSQNSSLNINNNNNSSNNNNINNNNNNNNIMAGSTSSVIYKNSGKPPLNENNNNNINNDNTVCNINNNNNSNNNKSNNSNNSNNSFKDDISSDEEPETDSDTEFKNNHHTNYHNSPKNQKHVDRKPFVNSKNNTNTNTNTHNTYNNNKNNNNNNTFEQQSNEDEESYSGSYKSSQNSVIYKPNLVSSPNFKSSLSSSSLISVGTNSLKNSPFPPSSPILSPQTDDPNNNNNNNNSNTTISQPLPIALNVSIESPRAFYNSGSNNNNNNNNNNNNNNNNNNNNTNSTSATTPIIQAQTHPTTQIPTSDIDTSNSDNNNNNNNNNTSDNNFNDYNNDYNNDYNNYETEFLPPKKTPPPPIPTKMSSTPPSSTSSFLSTSSVTSVNSNNSVTSSTSTNTSNSSSPKHSSSQKSKSVFSKIIKEGKKRLATKFNSHHHHNSGNNSSNSNNNNNDDEVPTYIHIYRGNGDESWRVKVTSSTTVRDLLSMSLTSTVKGEPPSLKLYLTSSLNSCTCVSSPNNLSSAPAVSSSSSSSTTLETTTIITSASPSSSSSSFTSPTTTNSLNSHLNHSNNINNNNNNNTNNNNNNNNNNNNNNNNNNTDRTNSNCTCNVNKPEKELNEDDKVLSVQKKWSGPSIFVLKNNCTKSSSSSTSSSSSSNNTNNNNNNNNTINNNSNNTGTRYSVSSITSESSEQSSNSHNSLNNNNHNNNNNNHSHNHNNSNNNNHHHHHHHHHNNNNNQNGQQEGVADSSSSSPWSSPALSSPSKQHSLQYFENIPTLALDSTNNNNNNNNDTDSTSSNMGTPTTSRRITTIFQKQHSRNNSSNNQNNNNINNNNNNNNNNNNNNNNEHLTPLSNSTSLSSASSISFLNSSNGNNSPNSNNSNSNNNNNNNNNNNNNNNNKKTTTTTTTTTMNSNGECWKNAERPRTGVRWISSTDLFLIKKIGAGSFSKVYKAKYMGEIVAIKVLKGEATSEQIELFKKEYDILSLVSSQNLIKFYGACKEKKLRMVTEYCQHGSLYHIMSKRKMDISWPLVFKWMHQAVDGINSLHTMRPALVHRDIKSQNLLINSQFDLKVADFGLAKPTELQTGSNSTIKGTMAYCAPELYNGISYSEKADVYSLGIVLWEITTRVITGKYQRPYEDNTEISFDFQIVIMSSKQGIRPTMPPNVPPKLSYLIQKCWNQDPNERPSCQQILLAITSLYDDYIYNPSRYNDLILNNDLNN.

Disordered stretches follow at residues 18–47 (PQQQQIPQQQEQQQQQQQQQQQQQQQQQQQ), 60–269 (QQQQ…SNKL), 322–458 (SISN…SDFN), 545–717 (QNSS…KSSQ), 749–783 (LKNSPFPPSSPILSPQTDDPNNNNNNNNSNTTISQ), 798–830 (AFYNSGSNNNNNNNNNNNNNNNNNNNNTNSTSA), 842–956 (TTQI…KSVF), 972–997 (NSHHHHNSGNNSSNSNNNNNDDEVPT), 1081–1151 (ITSA…CNVN), 1179–1305 (KNNC…PSKQ), 1318–1343 (ALDSTNNNNNNNNDTDSTSSNMGTPT), and 1355–1459 (QHSR…ECWK). Composition is skewed to low complexity over residues 19-47 (QQQQIPQQQEQQQQQQQQQQQQQQQQQQQ), 60-85 (QQQQEQQNNNNNINDNINGNNNSNEI), 92-105 (NITNNNGTSIIISL), and 112-237 (ALNS…NNNN). The span at 238-256 (KQMTPPTFKNNLQVKHQPQ) shows a compositional bias: polar residues. 4 stretches are compositionally biased toward low complexity: residues 257-269 (SSSGGSIGGSNKL), 322-341 (SISNTTNETTTTTTTTTNTT), 348-451 (GSIG…NNGV), and 546-572 (NSSLNINNNNNSSNNNNINNNNNNNNI). Residues 573 to 582 (MAGSTSSVIY) are compositionally biased toward polar residues. Residues 591 to 627 (NENNNNNINNDNTVCNINNNNNSNNNKSNNSNNSNNS) are compositionally biased toward low complexity. The span at 633-643 (SSDEEPETDSD) shows a compositional bias: acidic residues. 8 stretches are compositionally biased toward low complexity: residues 674–697 (NNTNTNTNTHNTYNNNKNNNNNNT), 759–778 (PILSPQTDDPNNNNNNNNSN), 805–824 (NNNNNNNNNNNNNNNNNNNN), 847–885 (TSDIDTSNSDNNNNNNNNNTSDNNFNDYNNDYNNDYNNY), 902–956 (TKMS…KSVF), 979–990 (SGNNSSNSNNNN), 1081–1149 (ITSA…CTCN), and 1180–1262 (NNCT…SNNN). Positions 1263–1273 (NHHHHHHHHHN) are enriched in basic residues. Low complexity-rich tracts occupy residues 1288 to 1303 (SSSSSPWSSPALSSPS), 1320 to 1338 (DSTNNNNNNNNDTDSTSSN), 1359 to 1386 (NNSSNNQNNNNINNNNNNNNNNNNNNNN), and 1393 to 1454 (SNST…MNSN). The Protein kinase domain occupies 1476 to 1744 (LFLIKKIGAG…AITSLYDDYI (269 aa)). ATP-binding positions include 1482 to 1490 (IGAGSFSKV) and K1503. The active-site Proton acceptor is the D1597.

This sequence belongs to the protein kinase superfamily. TKL Ser/Thr protein kinase family.

It carries out the reaction L-seryl-[protein] + ATP = O-phospho-L-seryl-[protein] + ADP + H(+). It catalyses the reaction L-threonyl-[protein] + ATP = O-phospho-L-threonyl-[protein] + ADP + H(+). The polypeptide is Probable serine/threonine-protein kinase DDB_G0282963 (Dictyostelium discoideum (Social amoeba)).